A 637-amino-acid polypeptide reads, in one-letter code: Chaperone protein DnaK (637 aa).

Thr196 carries the phosphothreonine; by autocatalysis modification. Residues 598–637 (AEAPGADAPEGQAPQDGGSKKGGEGAVENAEYEVIDGDGK) form a disordered region. Positions 627–637 (AEYEVIDGDGK) are enriched in acidic residues.

This sequence belongs to the heat shock protein 70 family.

Functionally, acts as a chaperone. The polypeptide is Chaperone protein DnaK (Chlorobium luteolum (strain DSM 273 / BCRC 81028 / 2530) (Pelodictyon luteolum)).